Here is a 369-residue protein sequence, read N- to C-terminus: Peptide chain release factor 1 (369 aa).

Position 234 is an N5-methylglutamine (Gln-234).

This sequence belongs to the prokaryotic/mitochondrial release factor family. Methylated by PrmC. Methylation increases the termination efficiency of RF1.

Its subcellular location is the cytoplasm. Functionally, peptide chain release factor 1 directs the termination of translation in response to the peptide chain termination codons UAG and UAA. This chain is Peptide chain release factor 1, found in Kocuria rhizophila (strain ATCC 9341 / DSM 348 / NBRC 103217 / DC2201).